The primary structure comprises 217 residues: MAHSIWHEKIKSFLPEHYYGRINHFLDEAYASGLVYPPRENVFKALQVTPLEETKVLILGQDPYHGPKQAQGLSFSVPEEISAPPSLINILKELADDIGPRDHHDLSTWASQGVLLLNACLTVPAGQANGHAGLIWEPFTDAVIKVLNEKDSPVVFILWGAYARKKKAFITNPKHHIIESPHPSPLSSYRGFFGSKPFSRTNAILEKEGMTGVDWLK.

The active-site Proton acceptor is the aspartate 62.

This sequence belongs to the uracil-DNA glycosylase (UDG) superfamily. UNG family.

It is found in the cytoplasm. It carries out the reaction Hydrolyzes single-stranded DNA or mismatched double-stranded DNA and polynucleotides, releasing free uracil.. Excises uracil residues from the DNA which can arise as a result of misincorporation of dUMP residues by DNA polymerase or due to deamination of cytosine. This Streptococcus pyogenes serotype M1 protein is Uracil-DNA glycosylase.